A 406-amino-acid chain; its full sequence is Serine/threonine transporter SstT (406 aa).

Helical transmembrane passes span 21–41, 45–65, 79–99, 138–158, 179–199, 213–233, 285–305, 313–333, and 360–380; these read LIIGIMLALWIPDIAAPVAIL, FVGALKAVAPVLVLILVMGAI, ILILYLLGTFLAGVTAVIASF, ALMNANYIGILSWAILLGLAL, VVKWVINLAPLGILGLVFDSI, LLLLLVGCMVFVALIINPLIV, ISIPLGATINMAGAAVTIAVL, LGITVDIPTAIILSVLSAIAA, and IAMQVVGVGFIIGVVQDSCET.

Belongs to the dicarboxylate/amino acid:cation symporter (DAACS) (TC 2.A.23) family.

It is found in the cell membrane. It catalyses the reaction L-serine(in) + Na(+)(in) = L-serine(out) + Na(+)(out). The enzyme catalyses L-threonine(in) + Na(+)(in) = L-threonine(out) + Na(+)(out). Its function is as follows. Involved in the import of serine and threonine into the cell, with the concomitant import of sodium (symport system). The chain is Serine/threonine transporter SstT from Desulfitobacterium hafniense (strain Y51).